A 408-amino-acid polypeptide reads, in one-letter code: Multidrug resistance protein MdtG (408 aa).

Transmembrane regions (helical) follow at residues 13 to 33, 51 to 71, 89 to 109, 112 to 132, 138 to 158, 170 to 190, 221 to 241, 253 to 273, 287 to 307, and 375 to 395; these read LYIA…VMPF, LWSG…SPFW, LGMA…QFLL, AALG…AIQV, GWAL…GPLL, PVFF…FFFI, LFVT…ILTL, LAFI…LSAP, ILVA…FVQS, and AVFL…WLSL.

Belongs to the major facilitator superfamily. DHA1 family. MdtG (TC 2.A.1.2.20) subfamily.

It is found in the cell inner membrane. The sequence is that of Multidrug resistance protein MdtG from Dickeya zeae (strain Ech586) (Dickeya dadantii (strain Ech586)).